Reading from the N-terminus, the 465-residue chain is Cysteine--tRNA ligase (465 aa).

Cysteine 30 lines the Zn(2+) pocket. A 'HIGH' region motif is present at residues 32–42 (ITVYDYCHVGH). Cysteine 214, histidine 239, and glutamate 243 together coordinate Zn(2+). Positions 271-275 (KMSKS) match the 'KMSKS' region motif. Lysine 274 serves as a coordination point for ATP.

Belongs to the class-I aminoacyl-tRNA synthetase family. As to quaternary structure, monomer. The cofactor is Zn(2+).

It localises to the cytoplasm. The enzyme catalyses tRNA(Cys) + L-cysteine + ATP = L-cysteinyl-tRNA(Cys) + AMP + diphosphate. In Burkholderia cenocepacia (strain ATCC BAA-245 / DSM 16553 / LMG 16656 / NCTC 13227 / J2315 / CF5610) (Burkholderia cepacia (strain J2315)), this protein is Cysteine--tRNA ligase.